We begin with the raw amino-acid sequence, 227 residues long: Translation initiation factor 6 (227 aa).

This sequence belongs to the eIF-6 family.

Functionally, binds to the 50S ribosomal subunit and prevents its association with the 30S ribosomal subunit to form the 70S initiation complex. The protein is Translation initiation factor 6 of Methanococcus aeolicus (strain ATCC BAA-1280 / DSM 17508 / OCM 812 / Nankai-3).